Consider the following 82-residue polypeptide: Sodium channel neurotoxin MeuNaTxalpha-3 (82 aa).

Residues 1 to 8 (LVMAGVES) form the signal peptide. One can recognise an LCN-type CS-alpha/beta domain in the interval 10 to 80 (RDGHIARNNN…VPIKVPGDCH (71 aa)). Cystine bridges form between Cys20–Cys79, Cys24–Cys52, Cys38–Cys62, and Cys42–Cys64.

In terms of tissue distribution, expressed by the venom gland.

It is found in the secreted. Functionally, alpha toxins bind voltage-independently at site-3 of sodium channels (Nav) and inhibit the inactivation of the activated channels, thereby blocking neuronal transmission. The sequence is that of Sodium channel neurotoxin MeuNaTxalpha-3 from Mesobuthus eupeus (Lesser Asian scorpion).